A 487-amino-acid polypeptide reads, in one-letter code: Aspartyl/glutamyl-tRNA(Asn/Gln) amidotransferase subunit B (487 aa).

It belongs to the GatB/GatE family. GatB subfamily. Heterotrimer of A, B and C subunits.

It carries out the reaction L-glutamyl-tRNA(Gln) + L-glutamine + ATP + H2O = L-glutaminyl-tRNA(Gln) + L-glutamate + ADP + phosphate + H(+). It catalyses the reaction L-aspartyl-tRNA(Asn) + L-glutamine + ATP + H2O = L-asparaginyl-tRNA(Asn) + L-glutamate + ADP + phosphate + 2 H(+). Allows the formation of correctly charged Asn-tRNA(Asn) or Gln-tRNA(Gln) through the transamidation of misacylated Asp-tRNA(Asn) or Glu-tRNA(Gln) in organisms which lack either or both of asparaginyl-tRNA or glutaminyl-tRNA synthetases. The reaction takes place in the presence of glutamine and ATP through an activated phospho-Asp-tRNA(Asn) or phospho-Glu-tRNA(Gln). In Chlamydia abortus (strain DSM 27085 / S26/3) (Chlamydophila abortus), this protein is Aspartyl/glutamyl-tRNA(Asn/Gln) amidotransferase subunit B.